The primary structure comprises 259 residues: Imidazole glycerol phosphate synthase subunit HisF (259 aa).

Residues aspartate 11 and aspartate 130 contribute to the active site.

This sequence belongs to the HisA/HisF family. As to quaternary structure, heterodimer of HisH and HisF.

The protein resides in the cytoplasm. The enzyme catalyses 5-[(5-phospho-1-deoxy-D-ribulos-1-ylimino)methylamino]-1-(5-phospho-beta-D-ribosyl)imidazole-4-carboxamide + L-glutamine = D-erythro-1-(imidazol-4-yl)glycerol 3-phosphate + 5-amino-1-(5-phospho-beta-D-ribosyl)imidazole-4-carboxamide + L-glutamate + H(+). Its pathway is amino-acid biosynthesis; L-histidine biosynthesis; L-histidine from 5-phospho-alpha-D-ribose 1-diphosphate: step 5/9. Its function is as follows. IGPS catalyzes the conversion of PRFAR and glutamine to IGP, AICAR and glutamate. The HisF subunit catalyzes the cyclization activity that produces IGP and AICAR from PRFAR using the ammonia provided by the HisH subunit. The chain is Imidazole glycerol phosphate synthase subunit HisF from Desulfovibrio desulfuricans (strain ATCC 27774 / DSM 6949 / MB).